The following is a 283-amino-acid chain: Elongation factor Ts (283 aa).

The interval 80–83 is involved in Mg(2+) ion dislocation from EF-Tu; it reads TDFV.

The protein belongs to the EF-Ts family.

The protein localises to the cytoplasm. Its function is as follows. Associates with the EF-Tu.GDP complex and induces the exchange of GDP to GTP. It remains bound to the aminoacyl-tRNA.EF-Tu.GTP complex up to the GTP hydrolysis stage on the ribosome. This Erwinia tasmaniensis (strain DSM 17950 / CFBP 7177 / CIP 109463 / NCPPB 4357 / Et1/99) protein is Elongation factor Ts.